Here is a 235-residue protein sequence, read N- to C-terminus: Transmembrane protein 215 (235 aa).

2 helical membrane-spanning segments follow: residues 12–32 (LVVALVSVFLVFGFMFTVSGM) and 40–60 (IPLLAIGPAICLPGIAAIALA). The tract at residues 99-145 (SDLESGKGSSDELAKKAGLRGKPPPQSQGEVSVASSINSPTPTEEGE) is disordered. The span at 125 to 140 (SQGEVSVASSINSPTP) shows a compositional bias: polar residues.

The protein localises to the membrane. This chain is Transmembrane protein 215 (TMEM215), found in Homo sapiens (Human).